The following is a 291-amino-acid chain: Ribose-phosphate pyrophosphokinase (291 aa).

ATP is bound by residues 34 to 36 (DGE) and 93 to 94 (RQ). Positions 127 and 165 each coordinate Mg(2+). Residue K188 is part of the active site. D-ribose 5-phosphate-binding positions include R190, D216, and 220–224 (STGGT).

The protein belongs to the ribose-phosphate pyrophosphokinase family. Class III (archaeal) subfamily. Mg(2+) serves as cofactor.

It is found in the cytoplasm. The enzyme catalyses D-ribose 5-phosphate + ATP = 5-phospho-alpha-D-ribose 1-diphosphate + AMP + H(+). It participates in metabolic intermediate biosynthesis; 5-phospho-alpha-D-ribose 1-diphosphate biosynthesis; 5-phospho-alpha-D-ribose 1-diphosphate from D-ribose 5-phosphate (route I): step 1/1. In terms of biological role, involved in the biosynthesis of the central metabolite phospho-alpha-D-ribosyl-1-pyrophosphate (PRPP) via the transfer of pyrophosphoryl group from ATP to 1-hydroxyl of ribose-5-phosphate (Rib-5-P). The protein is Ribose-phosphate pyrophosphokinase of Sulfolobus acidocaldarius (strain ATCC 33909 / DSM 639 / JCM 8929 / NBRC 15157 / NCIMB 11770).